Consider the following 512-residue polypeptide: Reduced folate transporter (512 aa).

At Met1 the chain carries N-acetylmethionine. The Cytoplasmic segment spans residues 1-29; that stretch reads MVPTGQVAEKQAYEEPRQDHELKSWRCLV. Residues 30-50 traverse the membrane as a helical segment; it reads FYLCFFGFMAQLRPGESFITP. Folate-binding residues include Ile48 and Thr49. At 51 to 62 the chain is on the extracellular side; it reads FLLERKFTKEQV. The helical transmembrane segment at 63–85 threads the bilayer; the sequence is TNEIIPMLPYSHLAVLVPVFLLT. Residues 86–89 are Cytoplasmic-facing; it reads DYLR. Residues 90–110 traverse the membrane as a helical segment; the sequence is YKPVLVLQCLSFVCVWLLLLL. Topologically, residues 111–114 are extracellular; the sequence is GTSV. A helical transmembrane segment spans residues 115–137; it reads VHMQLMEVFYSVTMAARIAYSSY. Glu121 and Arg131 together coordinate folate. Topologically, residues 138 to 151 are cytoplasmic; sequence IFSLVHPSRYQRMA. The chain crosses the membrane as a helical span at residues 152-176; that stretch reads SYSRAAVLLGVFISSVLGQALVTVG. Residue Val162 participates in folate binding. At 177 to 181 the chain is on the extracellular side; sequence HISTY. Residues 182 to 200 form a helical membrane-spanning segment; the sequence is TLNCVSLGFILFSLVLSLF. Residues 201-266 are Cytoplasmic-facing; the sequence is LKRPKRSLFF…ELVENARQPQ (66 aa). A helical membrane pass occupies residues 267-292; that stretch reads LRLWCLWWVFNSSGYYLITYYVHVLW. Positions 281, 282, and 286 each coordinate folate. Residues 293–300 lie on the Extracellular side of the membrane; the sequence is RSTDSSLS. The chain crosses the membrane as a helical span at residues 301–323; that stretch reads YNGAVDAASTLLSAITSFSAGFL. Residues 324–329 lie on the Cytoplasmic side of the membrane; the sequence is SIRWTL. The chain crosses the membrane as a helical span at residues 330–350; it reads WSKLVIAGVIAIQASLVFCMF. The Extracellular portion of the chain corresponds to 351–353; the sequence is QIR. A helical membrane pass occupies residues 354–377; the sequence is DIWVCYVTFVLFRGAYQFLVPIAT. Folate is bound by residues Arg366 and Gln370. At 378 to 391 the chain is on the cytoplasmic side; it reads FQIASSLSKELCAL. Residues 392 to 415 form a helical membrane-spanning segment; it reads VFGINTFLATALKTCITLVVSDKR. The required for substrate-binding stretch occupies residues 400–412; sequence ATALKTCITLVVS. Residues 416–423 are Extracellular-facing; that stretch reads GLGLQVRD. A helical membrane pass occupies residues 424–448; the sequence is QFRIYFIYFLMLSITCFAWAGLDGL. Over 449–512 the chain is Cytoplasmic; that stretch reads RYCQRGRHQP…RGDLRVEAKA (64 aa). A phosphoserine mark is found at Ser467, Ser472, and Ser477. The tract at residues 478-512 is disordered; sequence LQDGDLRGPQPSAPQLLSEDGMEDDRGDLRVEAKA.

Belongs to the reduced folate carrier (RFC) transporter (TC 2.A.48) family.

It localises to the cell membrane. The protein localises to the apical cell membrane. The protein resides in the basolateral cell membrane. The catalysed reaction is 5-amino-1-(5-phospho-beta-D-ribosyl)imidazole-4-carboxamide(in) + (6S)-5-methyl-5,6,7,8-tetrahydrofolate(out) = 5-amino-1-(5-phospho-beta-D-ribosyl)imidazole-4-carboxamide(out) + (6S)-5-methyl-5,6,7,8-tetrahydrofolate(in). Antiporter that mediates the import of reduced folates, driven by the export of organic anions. Also acts as an importer of immunoreactive cyclic dinucleotides, but with a lower transporter activity. Mechanistically, acts as a secondary active transporter, which exports intracellular organic anions down their concentration gradients to facilitate the uptake of its substrates. Has high affinity for N5-methyltetrahydrofolate, the predominant circulating form of folate. Also mediates the import of antifolate drug methotrexate. 5-amino-4-imidazolecarboxamide riboside (AICAR), when phosphorylated to AICAR monophosphate, can serve as an organic anion for antiporter activity. This Mus musculus (Mouse) protein is Reduced folate transporter.